The primary structure comprises 247 residues: Transmembrane protein 33 (247 aa).

An N-acetylalanine modification is found at alanine 2. Over 2 to 31 (ADTTPNGPQGAGAVQFMMTNKLDTAMWLSR) the chain is Lumenal. Residues 32-52 (LFTVYCSALFVLPLLGLHEAA) form a helical membrane-spanning segment. Residues 53-100 (SFYQRALLANALTSALRLHQRLPHFQLSRAFLAQALLEDSCHYLLYSL) are Cytoplasmic-facing. Residues 101-121 (IFVNSYPVTMSIFPVLLFSLL) traverse the membrane as a helical segment. The Lumenal portion of the chain corresponds to 122–155 (HAATYTKKVLDAKGSNSLPLLRSVLDKLSTNQQN). The chain crosses the membrane as a helical span at residues 156-176 (ILKFIACNEIFLMPATVFMLF). The Cytoplasmic segment spans residues 177–247 (SGQGSLLQPF…FISRLAPTVA (71 aa)).

This sequence belongs to the PER33/POM33 family. As to quaternary structure, interacts with EIF2AK3. Interacts with ARL6IP1, isoform RTN1-A of RTN1, isoform RTN2-B of RTN2, isoform 3 of RTN3 and isoform 3 of RTN4. Interacts with RNF5. Interacts with RNF26. Interacts with PKD2. Highly expressed in the liver and significantly in brain, lungs and kidneys.

The protein localises to the endoplasmic reticulum membrane. The protein resides in the melanosome. Its subcellular location is the nucleus envelope. Functionally, acts as a regulator of the tubular endoplasmic reticulum (ER) network by modulating intracellular calcium homeostasis. Mechanistically, stimulates PKD2 calcium-dependent activity. Suppresses the RTN3/4-induced formation of the ER tubules. Positively regulates PERK-mediated and IRE1-mediated unfolded protein response signaling. Plays an essential role in VEGF-mediated release of Ca(2+) from ER stores during angiogenesis. Also plays a role in the modulation of innate immune signaling through the cGAS-STING pathway by interacting with RNF26. Participates in lipid metabolism by acting as a downstream effector of the pyruvate kinase/PKM. Forms a complex with RNF5 to facilitate polyubiquitination and subsequent degradation of SCAP on the ER membrane. The chain is Transmembrane protein 33 (Tmem33) from Rattus norvegicus (Rat).